The chain runs to 444 residues: Cytokine receptor-like factor 3 (444 aa).

Positions 1-65 form a coiled coil; sequence MSIEAEALLQ…QELQTAVSRL (65 aa). The region spanning 177–270 is the Fibronectin type-III domain; that stretch reads PPVQIEELVE…PQTGYTTLAP (94 aa).

This sequence belongs to the cytokine receptor-like factor 3 family.

The protein resides in the cytoplasm. Functionally, may play a role in the negative regulation of cell cycle progression. The sequence is that of Cytokine receptor-like factor 3 (crlf3) from Danio rerio (Zebrafish).